The sequence spans 875 residues: Probable ATP-dependent RNA helicase DDX10 (875 aa).

Positions 1-44 (MGKTVASLGQGTRPDPVRSFNRWKKKHSHRQHQKKERRKQLKKP) are disordered. T4 bears the Phosphothreonine mark. At S7 the chain carries Phosphoserine. A compositionally biased stretch (basic residues) spans 21-41 (NRWKKKHSHRQHQKKERRKQL). Residues 69 to 97 (TRFSDFPLSKKTLKGLQEAQYRLVTEIQK) carry the Q motif motif. ATP contacts are provided by residues 89–91 (YRL), Q96, and 113–120 (AKTGSGKT). The Helicase ATP-binding domain maps to 100 to 274 (IGLALQGKDV…RLSLKDPEYV (175 aa)). The short motif at 222–225 (DEAD) is the DEAD box element. In terms of domain architecture, Helicase C-terminal spans 300–449 (KISVLFSFLR…EIKINPEKLI (150 aa)). The disordered stretch occupies residues 525 to 612 (LVKNPVTEAV…HTESVVSIEE (88 aa)). S540 is subject to Phosphoserine. An N6-acetyllysine modification is found at K556. Positions 562–575 (KSGERLEETEHRLA) are enriched in basic and acidic residues. The segment covering 578 to 593 (DGDEEQDEETEDEETE) has biased composition (acidic residues). At T587 the chain carries Phosphothreonine. Residues 594 to 604 (DHLGKAREPHT) are compositionally biased toward basic and acidic residues. A Glycyl lysine isopeptide (Lys-Gly) (interchain with G-Cter in SUMO2) cross-link involves residue K652. A compositionally biased stretch (basic and acidic residues) spans 734–744 (EEDKFDKEEYR). A disordered region spans residues 734–860 (EEDKFDKEEY…VEPLDTGLSL (127 aa)). Residues 745-754 (KKIKAKHRER) are compositionally biased toward basic residues. Residues 755–774 (RLKEREARREANKRQAKARD) show a composition bias toward basic and acidic residues. Over residues 775 to 789 (EEEAFLDWSDEDDGG) the composition is skewed to acidic residues. At S783 the chain carries Phosphoserine. Residues 797–831 (DPDKHRSSEESESEDTNHKMSDTKKKQETRKRNNT) are compositionally biased toward basic and acidic residues.

This sequence belongs to the DEAD box helicase family. DDX10/DBP4 subfamily. In terms of assembly, interacts with AIM2; this interaction promotes AIM2 stability. Interacts with SCNA; this interaction causes DDX10 mislocalization to the nucleoplasm and cytoplasmic inclusions.

It is found in the cytoplasm. Its subcellular location is the nucleus. The protein localises to the nucleolus. It carries out the reaction ATP + H2O = ADP + phosphate + H(+). Its function is as follows. Putative ATP-dependent RNA helicase that plays various role in innate immunity or inflammation. Plays a role in the enhancement of AIM2-induced inflammasome activation by interacting with AIM2 and stabilizing its protein level. Negatively regulates viral infection by promoting interferon beta production and interferon stimulated genes/ISGs expression. The protein is Probable ATP-dependent RNA helicase DDX10 (Ddx10) of Mus musculus (Mouse).